The primary structure comprises 355 residues: UDP-N-acetylglucosamine--N-acetylmuramyl-(pentapeptide) pyrophosphoryl-undecaprenol N-acetylglucosamine transferase (355 aa).

UDP-N-acetyl-alpha-D-glucosamine-binding positions include 14-16 (TGG), Asn126, Arg162, Ser190, Ile244, and Gln289.

Belongs to the glycosyltransferase 28 family. MurG subfamily.

The protein resides in the cell inner membrane. The catalysed reaction is di-trans,octa-cis-undecaprenyl diphospho-N-acetyl-alpha-D-muramoyl-L-alanyl-D-glutamyl-meso-2,6-diaminopimeloyl-D-alanyl-D-alanine + UDP-N-acetyl-alpha-D-glucosamine = di-trans,octa-cis-undecaprenyl diphospho-[N-acetyl-alpha-D-glucosaminyl-(1-&gt;4)]-N-acetyl-alpha-D-muramoyl-L-alanyl-D-glutamyl-meso-2,6-diaminopimeloyl-D-alanyl-D-alanine + UDP + H(+). It participates in cell wall biogenesis; peptidoglycan biosynthesis. Functionally, cell wall formation. Catalyzes the transfer of a GlcNAc subunit on undecaprenyl-pyrophosphoryl-MurNAc-pentapeptide (lipid intermediate I) to form undecaprenyl-pyrophosphoryl-MurNAc-(pentapeptide)GlcNAc (lipid intermediate II). The sequence is that of UDP-N-acetylglucosamine--N-acetylmuramyl-(pentapeptide) pyrophosphoryl-undecaprenol N-acetylglucosamine transferase from Paracidovorax citrulli (strain AAC00-1) (Acidovorax citrulli).